The primary structure comprises 93 residues: Small ribosomal subunit protein uS19 (93 aa).

This sequence belongs to the universal ribosomal protein uS19 family.

Its function is as follows. Protein S19 forms a complex with S13 that binds strongly to the 16S ribosomal RNA. This is Small ribosomal subunit protein uS19 from Ligilactobacillus salivarius (strain UCC118) (Lactobacillus salivarius).